A 218-amino-acid chain; its full sequence is Peptidyl-prolyl cis-trans isomerase FKBP7 (218 aa).

A signal peptide spans 1–19; that stretch reads MNLLFRLAVFLSLWCCSDA. N-linked (GlcNAc...) asparagine glycans are attached at residues Asn-41 and Asn-128. Residues 49-141 form the PPIase FKBP-type domain; the sequence is GDLLNAHYDG…MFEIELYAVT (93 aa). 2 consecutive EF-hand domains span residues 141–176 and 185–218; these read TKGP…DFEK and YQKA…HDEL. Positions 154, 156, 158, 160, 165, 198, 200, 202, and 209 each coordinate Ca(2+). Residues 197–218 form a disordered region; that stretch reads NDHNGDGFISPKEYNVHQHDEL. A Prevents secretion from ER motif is present at residues 215–218; the sequence is HDEL.

Glycosylated. As to expression, expressed at highest levels in heart, lung and testis. Weakly expressed in kidney and lymph node. Little or no expression detected in brain, thymus, spleen and liver.

It is found in the endoplasmic reticulum lumen. It catalyses the reaction [protein]-peptidylproline (omega=180) = [protein]-peptidylproline (omega=0). PPIases accelerate the folding of proteins during protein synthesis. The polypeptide is Peptidyl-prolyl cis-trans isomerase FKBP7 (Fkbp7) (Mus musculus (Mouse)).